The following is a 396-amino-acid chain: MPQEFEDARAVLQKIEDAGFDAFFVGGSVRDTLLNKPIHDVDIASSAYPAEIKHIFKKTVDTGIEHGTVMVIHDGEGYEVTTFRTESGYQDFRRPDQVTFVRSLKEDLMRRDFTINAFALKEDRTVIDIFDGLSDLEHKIIRAVGDPHERFHEDALRMMRAVRFASQLDFKIEAKTLKAIEENNMLLGKISVERILVEFEKMMLGSKPNRGLEDMLTTKLNEYCPGFKDRSKELDQLTKYPLKLLENPEQVWTMIAWSLKLTPQEVMPFLKQWKTSNDLIKNVSATLQVLSMDKNDQNERLALFNAGEANVVNAIRVAQILGMNREAWLDTYQNLQIKDTHEMAITGKELIQKGIIKPGPQMGQVLNRLKLMVINDELKNESLALLNAVNKLQKDD.

2 residues coordinate ATP: glycine 27 and arginine 30. The CTP site is built by glycine 27 and arginine 30. Mg(2+) contacts are provided by aspartate 40 and aspartate 42. ATP is bound by residues arginine 111, aspartate 154, arginine 157, arginine 160, and arginine 163. The CTP site is built by arginine 111, aspartate 154, arginine 157, arginine 160, and arginine 163.

The protein belongs to the tRNA nucleotidyltransferase/poly(A) polymerase family. Bacterial CCA-adding enzyme type 3 subfamily. Homodimer. The cofactor is Mg(2+).

It carries out the reaction a tRNA precursor + 2 CTP + ATP = a tRNA with a 3' CCA end + 3 diphosphate. It catalyses the reaction a tRNA with a 3' CCA end + 2 CTP + ATP = a tRNA with a 3' CCACCA end + 3 diphosphate. Its function is as follows. Catalyzes the addition and repair of the essential 3'-terminal CCA sequence in tRNAs without using a nucleic acid template. Adds these three nucleotides in the order of C, C, and A to the tRNA nucleotide-73, using CTP and ATP as substrates and producing inorganic pyrophosphate. tRNA 3'-terminal CCA addition is required both for tRNA processing and repair. Also involved in tRNA surveillance by mediating tandem CCA addition to generate a CCACCA at the 3' terminus of unstable tRNAs. While stable tRNAs receive only 3'-terminal CCA, unstable tRNAs are marked with CCACCA and rapidly degraded. The polypeptide is CCA-adding enzyme (Pediococcus pentosaceus (strain ATCC 25745 / CCUG 21536 / LMG 10740 / 183-1w)).